The following is a 346-amino-acid chain: Holliday junction branch migration complex subunit RuvB (346 aa).

The segment at 1–182 (MKIELLTTPA…FGINSRFDYY (182 aa)) is large ATPase domain (RuvB-L). Residues Ile21, Arg22, Gly63, Lys66, Thr67, Thr68, 129–131 (EDF), Arg172, Tyr182, and Arg219 contribute to the ATP site. A Mg(2+)-binding site is contributed by Thr67. The small ATPAse domain (RuvB-S) stretch occupies residues 183 to 253 (SPDLLEGIVM…IAMKTLECLD (71 aa)). The head domain (RuvB-H) stretch occupies residues 256–346 (EEGLDDMDKK…GLFDADGNLS (91 aa)). DNA contacts are provided by Arg311 and Arg316.

It belongs to the RuvB family. In terms of assembly, homohexamer. Forms an RuvA(8)-RuvB(12)-Holliday junction (HJ) complex. HJ DNA is sandwiched between 2 RuvA tetramers; dsDNA enters through RuvA and exits via RuvB. An RuvB hexamer assembles on each DNA strand where it exits the tetramer. Each RuvB hexamer is contacted by two RuvA subunits (via domain III) on 2 adjacent RuvB subunits; this complex drives branch migration. In the full resolvosome a probable DNA-RuvA(4)-RuvB(12)-RuvC(2) complex forms which resolves the HJ.

The protein localises to the cytoplasm. The enzyme catalyses ATP + H2O = ADP + phosphate + H(+). In terms of biological role, the RuvA-RuvB-RuvC complex processes Holliday junction (HJ) DNA during genetic recombination and DNA repair, while the RuvA-RuvB complex plays an important role in the rescue of blocked DNA replication forks via replication fork reversal (RFR). RuvA specifically binds to HJ cruciform DNA, conferring on it an open structure. The RuvB hexamer acts as an ATP-dependent pump, pulling dsDNA into and through the RuvAB complex. RuvB forms 2 homohexamers on either side of HJ DNA bound by 1 or 2 RuvA tetramers; 4 subunits per hexamer contact DNA at a time. Coordinated motions by a converter formed by DNA-disengaged RuvB subunits stimulates ATP hydrolysis and nucleotide exchange. Immobilization of the converter enables RuvB to convert the ATP-contained energy into a lever motion, pulling 2 nucleotides of DNA out of the RuvA tetramer per ATP hydrolyzed, thus driving DNA branch migration. The RuvB motors rotate together with the DNA substrate, which together with the progressing nucleotide cycle form the mechanistic basis for DNA recombination by continuous HJ branch migration. Branch migration allows RuvC to scan DNA until it finds its consensus sequence, where it cleaves and resolves cruciform DNA. In Chlorobium phaeovibrioides (strain DSM 265 / 1930) (Prosthecochloris vibrioformis (strain DSM 265)), this protein is Holliday junction branch migration complex subunit RuvB.